Reading from the N-terminus, the 212-residue chain is Peptide methionine sulfoxide reductase MsrA (212 aa).

Cys-52 is an active-site residue.

It belongs to the MsrA Met sulfoxide reductase family.

The enzyme catalyses L-methionyl-[protein] + [thioredoxin]-disulfide + H2O = L-methionyl-(S)-S-oxide-[protein] + [thioredoxin]-dithiol. It catalyses the reaction [thioredoxin]-disulfide + L-methionine + H2O = L-methionine (S)-S-oxide + [thioredoxin]-dithiol. Its function is as follows. Has an important function as a repair enzyme for proteins that have been inactivated by oxidation. Catalyzes the reversible oxidation-reduction of methionine sulfoxide in proteins to methionine. This chain is Peptide methionine sulfoxide reductase MsrA, found in Salmonella paratyphi A (strain AKU_12601).